The following is a 328-amino-acid chain: Phenylalanine--tRNA ligase alpha subunit (328 aa).

E245 lines the Mg(2+) pocket.

It belongs to the class-II aminoacyl-tRNA synthetase family. Phe-tRNA synthetase alpha subunit type 1 subfamily. In terms of assembly, tetramer of two alpha and two beta subunits. Mg(2+) is required as a cofactor.

It localises to the cytoplasm. The catalysed reaction is tRNA(Phe) + L-phenylalanine + ATP = L-phenylalanyl-tRNA(Phe) + AMP + diphosphate + H(+). The sequence is that of Phenylalanine--tRNA ligase alpha subunit from Helicobacter pylori (strain P12).